Consider the following 487-residue polypeptide: Kynureninase 1 (487 aa).

Pyridoxal 5'-phosphate contacts are provided by residues leucine 149, threonine 150, 177–180, serine 234, aspartate 263, histidine 266, and tyrosine 288; that span reads FPSD. Lysine 289 bears the N6-(pyridoxal phosphate)lysine mark. Pyridoxal 5'-phosphate contacts are provided by tryptophan 329 and asparagine 357.

This sequence belongs to the kynureninase family. As to quaternary structure, homodimer. It depends on pyridoxal 5'-phosphate as a cofactor.

Its subcellular location is the cytoplasm. It carries out the reaction L-kynurenine + H2O = anthranilate + L-alanine + H(+). The catalysed reaction is 3-hydroxy-L-kynurenine + H2O = 3-hydroxyanthranilate + L-alanine + H(+). The protein operates within amino-acid degradation; L-kynurenine degradation; L-alanine and anthranilate from L-kynurenine: step 1/1. Its pathway is cofactor biosynthesis; NAD(+) biosynthesis; quinolinate from L-kynurenine: step 2/3. Functionally, catalyzes the cleavage of L-kynurenine (L-Kyn) and L-3-hydroxykynurenine (L-3OHKyn) into anthranilic acid (AA) and 3-hydroxyanthranilic acid (3-OHAA), respectively. This Emericella nidulans (strain FGSC A4 / ATCC 38163 / CBS 112.46 / NRRL 194 / M139) (Aspergillus nidulans) protein is Kynureninase 1 (bna5-1).